The sequence spans 239 residues: Ribonuclease PH (239 aa).

Residues arginine 86 and 124 to 126 (GTR) contribute to the phosphate site.

Belongs to the RNase PH family. Homohexameric ring arranged as a trimer of dimers.

It carries out the reaction tRNA(n+1) + phosphate = tRNA(n) + a ribonucleoside 5'-diphosphate. Its function is as follows. Phosphorolytic 3'-5' exoribonuclease that plays an important role in tRNA 3'-end maturation. Removes nucleotide residues following the 3'-CCA terminus of tRNAs; can also add nucleotides to the ends of RNA molecules by using nucleoside diphosphates as substrates, but this may not be physiologically important. Probably plays a role in initiation of 16S rRNA degradation (leading to ribosome degradation) during starvation. In Sinorhizobium medicae (strain WSM419) (Ensifer medicae), this protein is Ribonuclease PH.